The following is a 418-amino-acid chain: Transcription termination factor Rho (418 aa).

The 76-residue stretch at 48–123 (SIFGEGTLEV…VKVDKVNGEA (76 aa)) folds into the Rho RNA-BD domain. Residues 169-174 (GKGQRA), 181-186 (KSGKTV), and Arg212 each bind ATP.

Belongs to the Rho family. Homohexamer. The homohexamer assembles into an open ring structure.

Functionally, facilitates transcription termination by a mechanism that involves Rho binding to the nascent RNA, activation of Rho's RNA-dependent ATPase activity, and release of the mRNA from the DNA template. The protein is Transcription termination factor Rho of Chromobacterium violaceum (strain ATCC 12472 / DSM 30191 / JCM 1249 / CCUG 213 / NBRC 12614 / NCIMB 9131 / NCTC 9757 / MK).